The sequence spans 192 residues: Imidazoleglycerol-phosphate dehydratase (192 aa).

Belongs to the imidazoleglycerol-phosphate dehydratase family.

The protein resides in the cytoplasm. The catalysed reaction is D-erythro-1-(imidazol-4-yl)glycerol 3-phosphate = 3-(imidazol-4-yl)-2-oxopropyl phosphate + H2O. The protein operates within amino-acid biosynthesis; L-histidine biosynthesis; L-histidine from 5-phospho-alpha-D-ribose 1-diphosphate: step 6/9. The sequence is that of Imidazoleglycerol-phosphate dehydratase from Staphylococcus epidermidis (strain ATCC 12228 / FDA PCI 1200).